Consider the following 335-residue polypeptide: Nuclear transcription factor Y subunit gamma (335 aa).

It belongs to the NFYC/HAP5 subunit family. As to quaternary structure, heterotrimeric transcription factor composed of three components, NF-YA, NF-YB and NF-YC. NF-YB and NF-YC must interact and dimerize for NF-YA association and DNA binding.

The protein localises to the nucleus. Its function is as follows. Component of the sequence-specific heterotrimeric transcription factor (NF-Y) which specifically recognizes a 5'-CCAAT-3' box motif found in the promoters of its target genes. NF-Y can function as both an activator and a repressor, depending on its interacting cofactors. This Pongo abelii (Sumatran orangutan) protein is Nuclear transcription factor Y subunit gamma (NFYC).